Reading from the N-terminus, the 312-residue chain is Aquaporin Lacbi1:391485 (312 aa).

At 1–50 (MDDKFDDDALPNSKTTPEDYGDKLAEYDYTNTFPNTWMRLREPFREYIAE) the chain is on the cytoplasmic side. A helical transmembrane segment spans residues 51-71 (FVGVAVLIIFGVGADCQVVLS). Topologically, residues 72–89 (ANTGVAPSPKGDYLSLNC) are extracellular. The helical transmembrane segment at 90–110 (GWAIGTAMGVWISGGISGGHI) threads the bilayer. The short motif at 111-113 (NPA) is the NPA 1 element. Residues 111-128 (NPAVTLALMAWRGFPWWK) lie on the Cytoplasmic side of the membrane. A helical membrane pass occupies residues 129–149 (VPGFIFAQLLGGIVGAGLVYV). Residues 150 to 183 (NYIHAIDIVEGGRHIRTLDTAGLFATYAADYMTN) are Extracellular-facing. N-linked (GlcNAc...) asparagine glycosylation occurs at Asn183. Residues 184–204 (VSCFFSEFLATAVLIVVIHAM) traverse the membrane as a helical segment. Residues 205–213 (NDKRNAPPP) are Cytoplasmic-facing. A helical membrane pass occupies residues 214 to 234 (AGLAPLVLFFLILGIGASLGM). Residues 235–267 (ETGYAINPARDLGPRMLTAMVGYGRQVFAFRNQ) lie on the Extracellular side of the membrane. An NPA 2 motif is present at residues 241–243 (NPA). Residues 268–288 (YWIWCPVIAPFLGAQVGTIFY) traverse the membrane as a helical segment. Over 289-312 (DLFFYKGQDNVFGRLGSHIHISPA) the chain is Cytoplasmic.

This sequence belongs to the MIP/aquaporin (TC 1.A.8) family.

Its subcellular location is the membrane. It catalyses the reaction H2O(in) = H2O(out). The catalysed reaction is glycerol(in) = glycerol(out). It carries out the reaction NH4(+)(in) = NH4(+)(out). In terms of biological role, water channel required to facilitate the transport of water across membranes. In addition to water, also shows strong glycerol and ammonium transport activities. May be involved in fungal nitrogen (ammonium) support of the plant host in symbiosis. Glycerol accumulation has never been observed in ectomycorrhizal (ECM) fungi, therefore, glycerol permeability of Lacbi1:391485 might be a relict of the affiliation of the protein to the group of aquaglyceroporins, and other osmotic active compounds (e.g. trehalose or mannitol) may have taken over glycerol function in ECM fungi. In Laccaria bicolor (strain S238N-H82 / ATCC MYA-4686) (Bicoloured deceiver), this protein is Aquaporin Lacbi1:391485.